The chain runs to 269 residues: Cytochrome c oxidase subunit 3 (269 aa).

Helical transmembrane passes span 13–33 (PFHL…LLVL), 46–66 (NGHY…SFWF), 90–110 (GVIL…WAFF), 138–160 (PLLN…HSII), 167–187 (ALYG…FQGV), 207–227 (FGTG…LVAL), and 245–265 (AGIL…ISIY).

It belongs to the cytochrome c oxidase subunit 3 family. In terms of assembly, component of the cytochrome c oxidase (complex IV, CIV), a multisubunit enzyme composed of a catalytic core of 3 subunits and several supernumerary subunits. The complex exists as a monomer or a dimer and forms supercomplexes (SCs) in the inner mitochondrial membrane with ubiquinol-cytochrome c oxidoreductase (cytochrome b-c1 complex, complex III, CIII).

Its subcellular location is the mitochondrion inner membrane. It catalyses the reaction 4 Fe(II)-[cytochrome c] + O2 + 8 H(+)(in) = 4 Fe(III)-[cytochrome c] + 2 H2O + 4 H(+)(out). Component of the cytochrome c oxidase, the last enzyme in the mitochondrial electron transport chain which drives oxidative phosphorylation. The respiratory chain contains 3 multisubunit complexes succinate dehydrogenase (complex II, CII), ubiquinol-cytochrome c oxidoreductase (cytochrome b-c1 complex, complex III, CIII) and cytochrome c oxidase (complex IV, CIV), that cooperate to transfer electrons derived from NADH and succinate to molecular oxygen, creating an electrochemical gradient over the inner membrane that drives transmembrane transport and the ATP synthase. Cytochrome c oxidase is the component of the respiratory chain that catalyzes the reduction of oxygen to water. Electrons originating from reduced cytochrome c in the intermembrane space (IMS) are transferred via the dinuclear copper A center (CU(A)) of subunit 2 and heme A of subunit 1 to the active site in subunit 1, a binuclear center (BNC) formed by heme A3 and copper B (CU(B)). The BNC reduces molecular oxygen to 2 water molecules using 4 electrons from cytochrome c in the IMS and 4 protons from the mitochondrial matrix. The chain is Cytochrome c oxidase subunit 3 (COX3) from Pyricularia grisea (Crabgrass-specific blast fungus).